A 38-amino-acid chain; its full sequence is uncharacterized protein (38 aa).

Residues 10–32 form a helical membrane-spanning segment; it reads FSLLWYFLVGGGKGEVCWRFLGI.

It localises to the membrane. This is an uncharacterized protein from Saccharomyces cerevisiae (strain ATCC 204508 / S288c) (Baker's yeast).